Here is a 388-residue protein sequence, read N- to C-terminus: Chorismate synthase (388 aa).

NADP(+) contacts are provided by Arg39 and Arg45. The segment at 95 to 118 (EKNEKSRRVSRPRPGHADLVGGMK) is disordered. Residues 130 to 132 (RSS), 251 to 252 (NA), Gly296, 311 to 315 (KPIPT), and Arg337 each bind FMN.

This sequence belongs to the chorismate synthase family. As to quaternary structure, homotetramer. It depends on FMNH2 as a cofactor.

The catalysed reaction is 5-O-(1-carboxyvinyl)-3-phosphoshikimate = chorismate + phosphate. The protein operates within metabolic intermediate biosynthesis; chorismate biosynthesis; chorismate from D-erythrose 4-phosphate and phosphoenolpyruvate: step 7/7. Its function is as follows. Catalyzes the anti-1,4-elimination of the C-3 phosphate and the C-6 proR hydrogen from 5-enolpyruvylshikimate-3-phosphate (EPSP) to yield chorismate, which is the branch point compound that serves as the starting substrate for the three terminal pathways of aromatic amino acid biosynthesis. This reaction introduces a second double bond into the aromatic ring system. This is Chorismate synthase from Listeria welshimeri serovar 6b (strain ATCC 35897 / DSM 20650 / CCUG 15529 / CIP 8149 / NCTC 11857 / SLCC 5334 / V8).